We begin with the raw amino-acid sequence, 501 residues long: UDP-N-acetylmuramate--L-alanine ligase (501 aa).

130–136 (GTHGKTS) lines the ATP pocket.

The protein belongs to the MurCDEF family.

The protein resides in the cytoplasm. It catalyses the reaction UDP-N-acetyl-alpha-D-muramate + L-alanine + ATP = UDP-N-acetyl-alpha-D-muramoyl-L-alanine + ADP + phosphate + H(+). Its pathway is cell wall biogenesis; peptidoglycan biosynthesis. Functionally, cell wall formation. In Nocardia farcinica (strain IFM 10152), this protein is UDP-N-acetylmuramate--L-alanine ligase.